Here is a 101-residue protein sequence, read N- to C-terminus: Urease subunit gamma (101 aa).

It belongs to the urease gamma subunit family. As to quaternary structure, heterotrimer of UreA (gamma), UreB (beta) and UreC (alpha) subunits. Three heterotrimers associate to form the active enzyme.

Its subcellular location is the cytoplasm. The enzyme catalyses urea + 2 H2O + H(+) = hydrogencarbonate + 2 NH4(+). Its pathway is nitrogen metabolism; urea degradation; CO(2) and NH(3) from urea (urease route): step 1/1. The sequence is that of Urease subunit gamma from Geobacillus kaustophilus (strain HTA426).